The following is a 473-amino-acid chain: Homeobox protein ATH1 (473 aa).

The tract at residues 205 to 221 (SKYLHSVQEILSHFAAY) is SR/KY domain. Positions 266–336 (QRRALEAKKT…NLRERICKKI (71 aa)) are BELL domain. The homeobox DNA-binding region spans 372 to 434 (IWRPQRGLPE…NARVRLWKPM (63 aa)). The tract at residues 448–473 (NNSHIQPNGPTLRMPKSVMMSQAMHK) is disordered.

The protein belongs to the TALE/BELL homeobox family. As to quaternary structure, may form heterodimeric complex with the TALE/KNOX protein STM. Most abundant in flowers.

It localises to the nucleus. Its function is as follows. Transcription factor which may be involved in the signal transduction pathway downstream of the COP1 gene. Controls floral competency as a specific activator of FLC expression. Is responsive of the nuclear import of SHOOT MERISTEMLESS (STM). In Arabidopsis thaliana (Mouse-ear cress), this protein is Homeobox protein ATH1 (ATH1).